The sequence spans 928 residues: Mating-type protein A-alpha Y4 (928 aa).

A DNA-binding region (homeobox) is located at residues 152–211 (GKRSRPKFHSEYTPVLELYFHFNAYPTYADRRILAEKTGMLTRQITVWFQNHRRRAKGPL). Disordered regions lie at residues 255-296 (KSLA…EAGP), 310-329 (DSVS…SQQN), 340-359 (TATK…AGQP), 406-451 (YAYV…HRVS), and 626-736 (ARRK…EQDL). Residues 344–353 (EKRRKMKKLP) show a composition bias toward basic residues. Basic and acidic residues predominate over residues 635–657 (KALEEKQAKKDRKERQKASRSQR). Low complexity-rich tracts occupy residues 668–682 (SRAS…LPAR) and 694–728 (ESAA…SMPG).

The protein resides in the nucleus. Specifies A-alpha-4 mating-type. May regulate the expression of genes specific to the homokaryotic cell type. The polypeptide is Mating-type protein A-alpha Y4 (Schizophyllum commune (Split gill fungus)).